The following is a 460-amino-acid chain: Methylenetetrahydrofolate--tRNA-(uracil-5-)-methyltransferase TrmFO (460 aa).

15 to 20 (GAGLAG) contacts FAD.

Belongs to the MnmG family. TrmFO subfamily. FAD is required as a cofactor.

The protein resides in the cytoplasm. The catalysed reaction is uridine(54) in tRNA + (6R)-5,10-methylene-5,6,7,8-tetrahydrofolate + NADH + H(+) = 5-methyluridine(54) in tRNA + (6S)-5,6,7,8-tetrahydrofolate + NAD(+). It carries out the reaction uridine(54) in tRNA + (6R)-5,10-methylene-5,6,7,8-tetrahydrofolate + NADPH + H(+) = 5-methyluridine(54) in tRNA + (6S)-5,6,7,8-tetrahydrofolate + NADP(+). Functionally, catalyzes the folate-dependent formation of 5-methyl-uridine at position 54 (M-5-U54) in all tRNAs. The protein is Methylenetetrahydrofolate--tRNA-(uracil-5-)-methyltransferase TrmFO of Synechococcus sp. (strain CC9902).